The following is a 207-amino-acid chain: Thymidylate kinase (207 aa).

7–14 (GCEGSGKS) contacts ATP.

It belongs to the thymidylate kinase family.

It catalyses the reaction dTMP + ATP = dTDP + ADP. Functionally, phosphorylation of dTMP to form dTDP in both de novo and salvage pathways of dTTP synthesis. The chain is Thymidylate kinase from Chlamydia felis (strain Fe/C-56) (Chlamydophila felis).